The primary structure comprises 305 residues: MELIFLGTSAGVPTRSRNVTAILLHLQHPTQPGVWLFDCGEGTQHQMLNTAFHPGKLERIFISHLHGDHLFGLPGLLCSRSMAGPPHPLTVYGPQGVREFIATTLRLSGSWTDFPLQIEEISAGDILDDGLRKVTAFRLEHPLECYGYRVVEHDKPGALNARALKAAGVTPGPLFQALKAGKTVTLADGRQINGADYLAPAVAGKSVAIFGDTAPCEAALALAQGVDVMVHETTLDASMEEKANARGHSSTRQTATLAREAAVGRLIMTHISSRYDDKGCQRLLAECRAIFPATELAYDFSVFPV.

Residues H64, H66, D68, H69, H141, D212, and H270 each contribute to the Zn(2+) site. The Proton acceptor role is filled by D68.

This sequence belongs to the RNase Z family. RNase BN subfamily. As to quaternary structure, homodimer. The cofactor is Zn(2+).

In terms of biological role, zinc phosphodiesterase, which has both exoribonuclease and endoribonuclease activities. The polypeptide is Ribonuclease BN (Salmonella paratyphi C (strain RKS4594)).